The chain runs to 195 residues: dCTP deaminase, dUMP-forming (195 aa).

Residues 105–110, Asp-123, 131–133, Gln-152, Tyr-166, Lys-173, and Gln-177 contribute to the dCTP site; these read RSSLGR and TLE. The active-site Proton donor/acceptor is the Glu-133. A disordered region spans residues 161-195; that stretch reads PADRPYGDERGSKYQDQDGPQASRIRGDREFGGTQ. A compositionally biased stretch (basic and acidic residues) spans 165-176; sequence PYGDERGSKYQD. Basic and acidic residues predominate over residues 185 to 195; that stretch reads IRGDREFGGTQ.

This sequence belongs to the dCTP deaminase family. In terms of assembly, homotrimer.

The enzyme catalyses dCTP + 2 H2O = dUMP + NH4(+) + diphosphate. The protein operates within pyrimidine metabolism; dUMP biosynthesis; dUMP from dCTP: step 1/1. Bifunctional enzyme that catalyzes both the deamination of dCTP to dUTP and the hydrolysis of dUTP to dUMP without releasing the toxic dUTP intermediate. In Halobacterium salinarum (strain ATCC 700922 / JCM 11081 / NRC-1) (Halobacterium halobium), this protein is dCTP deaminase, dUMP-forming.